A 306-amino-acid polypeptide reads, in one-letter code: uncharacterized protein (306 aa).

Residue Asp204 is the Proton acceptor of the active site.

The protein belongs to the aminoglycoside phosphotransferase family.

This is an uncharacterized protein from Bacillus subtilis (strain 168).